Here is a 400-residue protein sequence, read N- to C-terminus: GTPase-binding protein rid1 (400 aa).

Over residues 16 to 27 (LSSDGLSESVNS) the composition is skewed to polar residues. The disordered stretch occupies residues 16–47 (LSSDGLSESVNSSDREDSLSFQTPSTPSEDEM). A GBD/FH3 domain is found at 39–400 (PSTPSEDEMP…PYKLVQTGST (362 aa)).

It localises to the cytoplasm. The sequence is that of GTPase-binding protein rid1 (rid1) from Schizosaccharomyces pombe (strain 972 / ATCC 24843) (Fission yeast).